Consider the following 364-residue polypeptide: FMNH(2)-dependent dimethylsulfone monooxygenase (364 aa).

This sequence belongs to the SsuD family.

It carries out the reaction dimethyl sulfone + FMNH2 + O2 = methanesulfinate + FMN + formaldehyde + H2O + 2 H(+). Involved in the dimethyl sulfide degradation pathway. Catalyzes the oxidation of dimethylsulfone (DMSO2) to yield methanesulfinate, which is oxidized spontaneously to methanesulfonate in the presence of dioxygen and FMNH(2). The chain is FMNH(2)-dependent dimethylsulfone monooxygenase from Pseudomonas fluorescens (strain Pf0-1).